The sequence spans 309 residues: Cilia-and flagella-associated protein 96 (309 aa).

Positions 220-249 (EEKKKTISNTFKPSSPGKKPGGMKAGTFDP) are disordered.

It belongs to the CFAP96 family. As to expression, detected in testis and fetal liver.

It localises to the cytoplasm. The protein localises to the cytoskeleton. The protein resides in the microtubule organizing center. It is found in the centrosome. The sequence is that of Cilia-and flagella-associated protein 96 from Homo sapiens (Human).